The sequence spans 442 residues: L-seryl-tRNA(Sec) selenium transferase (442 aa).

N6-(pyridoxal phosphate)lysine is present on K284.

It belongs to the SelA family. It depends on pyridoxal 5'-phosphate as a cofactor.

Its subcellular location is the cytoplasm. The enzyme catalyses L-seryl-tRNA(Sec) + selenophosphate + H(+) = L-selenocysteinyl-tRNA(Sec) + phosphate. It functions in the pathway aminoacyl-tRNA biosynthesis; selenocysteinyl-tRNA(Sec) biosynthesis; selenocysteinyl-tRNA(Sec) from L-seryl-tRNA(Sec) (bacterial route): step 1/1. In terms of biological role, converts seryl-tRNA(Sec) to selenocysteinyl-tRNA(Sec) required for selenoprotein biosynthesis. The chain is L-seryl-tRNA(Sec) selenium transferase from Campylobacter fetus subsp. fetus (strain 82-40).